A 177-amino-acid polypeptide reads, in one-letter code: uncharacterized protein (177 aa).

This sequence to Synechocystis PCC 6803 slr1290 and sll0925.

This is an uncharacterized protein from Synechocystis sp. (strain ATCC 27184 / PCC 6803 / Kazusa).